The following is a 25-amino-acid chain: Flagellar filament core protein flaB1 (25 aa).

The protein belongs to the bacterial flagellin family. In terms of assembly, the flagellum consists of an outer layer composed of two sheath proteins, flaA1 (44 kDa) and flaA2 (35 kDa) around a core that contains three proteins flaB1 (37 kDa), flaB2 (34 kDa) and flaB3 (32 kDa).

It localises to the periplasmic flagellum. The protein localises to the periplasm. In terms of biological role, component of the core of the flagella. This chain is Flagellar filament core protein flaB1 (flaB1), found in Brachyspira hyodysenteriae (Treponema hyodysenteriae).